The sequence spans 295 residues: Cytidine deaminase (295 aa).

2 consecutive CMP/dCMP-type deaminase domains span residues 48–168 (ADDE…FGPA) and 187–295 (EETT…YLAI). 89–91 (NLE) provides a ligand contact to substrate. His102 is a Zn(2+) binding site. Glu104 (proton donor) is an active-site residue. Residues Cys129 and Cys132 each contribute to the Zn(2+) site.

It belongs to the cytidine and deoxycytidylate deaminase family. As to quaternary structure, homodimer. The cofactor is Zn(2+).

The enzyme catalyses cytidine + H2O + H(+) = uridine + NH4(+). The catalysed reaction is 2'-deoxycytidine + H2O + H(+) = 2'-deoxyuridine + NH4(+). In terms of biological role, this enzyme scavenges exogenous and endogenous cytidine and 2'-deoxycytidine for UMP synthesis. The sequence is that of Cytidine deaminase from Vibrio atlanticus (strain LGP32) (Vibrio splendidus (strain Mel32)).